Consider the following 126-residue polypeptide: Autophagy-related protein 8-like protein DDB_G0290491 (126 aa).

Gly123 carries the Phosphatidylethanolamine amidated glycine lipid modification. Residues 124 to 126 (SDI) constitute a propeptide, removed in mature form.

This sequence belongs to the ATG8 family.

The protein resides in the membrane. This chain is Autophagy-related protein 8-like protein DDB_G0290491, found in Dictyostelium discoideum (Social amoeba).